Here is a 1005-residue protein sequence, read N- to C-terminus: Isoleucine--tRNA ligase (1005 aa).

The 'HIGH' region signature appears at 70–80 (PYANGNIHIGH). An L-isoleucyl-5'-AMP-binding site is contributed by E629. The 'KMSKS' region signature appears at 670 to 674 (KMSKS). K673 serves as a coordination point for ATP.

It belongs to the class-I aminoacyl-tRNA synthetase family. IleS type 1 subfamily. In terms of assembly, monomer.

The protein localises to the cytoplasm. It catalyses the reaction tRNA(Ile) + L-isoleucine + ATP = L-isoleucyl-tRNA(Ile) + AMP + diphosphate. Functionally, catalyzes the attachment of isoleucine to tRNA(Ile). As IleRS can inadvertently accommodate and process structurally similar amino acids such as valine, to avoid such errors it has two additional distinct tRNA(Ile)-dependent editing activities. One activity is designated as 'pretransfer' editing and involves the hydrolysis of activated Val-AMP. The other activity is designated 'posttransfer' editing and involves deacylation of mischarged Val-tRNA(Ile). In Rhodopseudomonas palustris (strain ATCC BAA-98 / CGA009), this protein is Isoleucine--tRNA ligase.